Consider the following 373-residue polypeptide: UDP-N-acetylglucosamine--N-acetylmuramyl-(pentapeptide) pyrophosphoryl-undecaprenol N-acetylglucosamine transferase (373 aa).

Residues 14–16, Asn128, Arg165, Ser199, and Gln295 contribute to the UDP-N-acetyl-alpha-D-glucosamine site; that span reads TAG.

Belongs to the glycosyltransferase 28 family. MurG subfamily.

The protein resides in the cell membrane. The catalysed reaction is di-trans,octa-cis-undecaprenyl diphospho-N-acetyl-alpha-D-muramoyl-L-alanyl-D-glutamyl-meso-2,6-diaminopimeloyl-D-alanyl-D-alanine + UDP-N-acetyl-alpha-D-glucosamine = di-trans,octa-cis-undecaprenyl diphospho-[N-acetyl-alpha-D-glucosaminyl-(1-&gt;4)]-N-acetyl-alpha-D-muramoyl-L-alanyl-D-glutamyl-meso-2,6-diaminopimeloyl-D-alanyl-D-alanine + UDP + H(+). It functions in the pathway cell wall biogenesis; peptidoglycan biosynthesis. Its function is as follows. Cell wall formation. Catalyzes the transfer of a GlcNAc subunit on undecaprenyl-pyrophosphoryl-MurNAc-pentapeptide (lipid intermediate I) to form undecaprenyl-pyrophosphoryl-MurNAc-(pentapeptide)GlcNAc (lipid intermediate II). The chain is UDP-N-acetylglucosamine--N-acetylmuramyl-(pentapeptide) pyrophosphoryl-undecaprenol N-acetylglucosamine transferase from Mycobacterium sp. (strain KMS).